A 383-amino-acid polypeptide reads, in one-letter code: Acetylornithine deacetylase (383 aa).

Position 80 (His80) interacts with Zn(2+). Asp82 is a catalytic residue. A Zn(2+)-binding site is contributed by Asp112. Glu144 is an active-site residue. Zn(2+)-binding residues include Glu145, Glu169, and His355.

It belongs to the peptidase M20A family. ArgE subfamily. Homodimer. Requires Zn(2+) as cofactor. It depends on Co(2+) as a cofactor. The cofactor is glutathione.

It is found in the cytoplasm. The enzyme catalyses N(2)-acetyl-L-ornithine + H2O = L-ornithine + acetate. Its pathway is amino-acid biosynthesis; L-arginine biosynthesis; L-ornithine from N(2)-acetyl-L-ornithine (linear): step 1/1. In terms of biological role, catalyzes the hydrolysis of the amide bond of N(2)-acetylated L-amino acids. Cleaves the acetyl group from N-acetyl-L-ornithine to form L-ornithine, an intermediate in L-arginine biosynthesis pathway, and a branchpoint in the synthesis of polyamines. This Salmonella typhi protein is Acetylornithine deacetylase.